We begin with the raw amino-acid sequence, 968 residues long: RNA polymerase-associated protein RapA (968 aa).

A Helicase ATP-binding domain is found at 163–332; it reads EVGQRFAPRV…FARLRLLDPD (170 aa). 176–183 provides a ligand contact to ATP; sequence DEVGLGKT. Residues 278–281 carry the DEAH box motif; that stretch reads DEAH. Positions 491-678 constitute a Helicase C-terminal domain; that stretch reads RVDWLIDFLK…NTKSRYQELK (188 aa).

Belongs to the SNF2/RAD54 helicase family. RapA subfamily. As to quaternary structure, interacts with the RNAP. Has a higher affinity for the core RNAP than for the holoenzyme. Its ATPase activity is stimulated by binding to RNAP.

Functionally, transcription regulator that activates transcription by stimulating RNA polymerase (RNAP) recycling in case of stress conditions such as supercoiled DNA or high salt concentrations. Probably acts by releasing the RNAP, when it is trapped or immobilized on tightly supercoiled DNA. Does not activate transcription on linear DNA. Probably not involved in DNA repair. The sequence is that of RNA polymerase-associated protein RapA from Shewanella piezotolerans (strain WP3 / JCM 13877).